The primary structure comprises 1648 residues: Putative 1-phosphatidylinositol-3-phosphate 5-kinase FAB1C (1648 aa).

Over residues 97–106 the composition is skewed to basic and acidic residues; it reads YDKVHPRDSP. Disordered regions lie at residues 97-116, 241-276, 721-746, and 1083-1139; these read YDKV…ATES, QEDH…NDDA, SEIP…ENQL, and KTGD…GTSL. Residues 1084 to 1130 are compositionally biased toward basic and acidic residues; sequence TGDDNAPRNPEMHDPPKIDRRMQEGSDERDEQSHTDSEANGDNKDPE. Residues 1316 to 1639 enclose the PIPK domain; sequence NLNNRESEPS…RFRKAMTTYF (324 aa).

Component of the PI(3,5)P2 regulatory complex at least composed of ATG18, SAC/FIG4, FAB1 and VAC14. Requires Mg(2+) as cofactor. The cofactor is Mn(2+).

The catalysed reaction is a 1,2-diacyl-sn-glycero-3-phospho-(1D-myo-inositol-3-phosphate) + ATP = a 1,2-diacyl-sn-glycero-3-phospho-(1D-myo-inositol-3,5-bisphosphate) + ADP + H(+). Functionally, the PI(3,5)P2 regulatory complex regulates both the synthesis and turnover of phosphatidylinositol 3,5-bisphosphate (PtdIns(3,5)P2). Catalyzes the phosphorylation of phosphatidylinositol 3-phosphate on the fifth hydroxyl of the myo-inositol ring, to form phosphatidylinositol 3,5-bisphosphate. This chain is Putative 1-phosphatidylinositol-3-phosphate 5-kinase FAB1C (FAB1C), found in Arabidopsis thaliana (Mouse-ear cress).